Consider the following 360-residue polypeptide: Phospho-N-acetylmuramoyl-pentapeptide-transferase (360 aa).

The next 10 membrane-spanning stretches (helical) occupy residues 26–46 (AILS…IMIK), 70–90 (GTPT…ILLW), 94–114 (SNPY…IGFV), 132–152 (WKYF…YAYG), 168–188 (IMPQ…VGTS), 199–219 (GLAI…AWAT), 236–256 (ASEL…FLWF), 263–283 (VFMG…IAVL), 288–308 (LILV…ILQV), and 338–358 (VIVR…ATLK).

This sequence belongs to the glycosyltransferase 4 family. MraY subfamily. Mg(2+) serves as cofactor.

The protein localises to the cell inner membrane. It carries out the reaction UDP-N-acetyl-alpha-D-muramoyl-L-alanyl-gamma-D-glutamyl-meso-2,6-diaminopimeloyl-D-alanyl-D-alanine + di-trans,octa-cis-undecaprenyl phosphate = di-trans,octa-cis-undecaprenyl diphospho-N-acetyl-alpha-D-muramoyl-L-alanyl-D-glutamyl-meso-2,6-diaminopimeloyl-D-alanyl-D-alanine + UMP. It participates in cell wall biogenesis; peptidoglycan biosynthesis. In terms of biological role, catalyzes the initial step of the lipid cycle reactions in the biosynthesis of the cell wall peptidoglycan: transfers peptidoglycan precursor phospho-MurNAc-pentapeptide from UDP-MurNAc-pentapeptide onto the lipid carrier undecaprenyl phosphate, yielding undecaprenyl-pyrophosphoryl-MurNAc-pentapeptide, known as lipid I. The sequence is that of Phospho-N-acetylmuramoyl-pentapeptide-transferase from Vibrio campbellii (strain ATCC BAA-1116).